The primary structure comprises 401 residues: 8-amino-7-oxononanoate synthase (401 aa).

A substrate-binding site is contributed by Arg19. Pyridoxal 5'-phosphate is bound at residue 106–107; it reads GY. Substrate is bound at residue His131. The pyridoxal 5'-phosphate site is built by Ser176, His204, and Thr233. At Lys236 the chain carries N6-(pyridoxal phosphate)lysine. Thr350 serves as a coordination point for substrate.

The protein belongs to the class-II pyridoxal-phosphate-dependent aminotransferase family. BioF subfamily. In terms of assembly, homodimer. The cofactor is pyridoxal 5'-phosphate.

The catalysed reaction is 6-carboxyhexanoyl-[ACP] + L-alanine + H(+) = (8S)-8-amino-7-oxononanoate + holo-[ACP] + CO2. Its pathway is cofactor biosynthesis; biotin biosynthesis. Functionally, catalyzes the decarboxylative condensation of pimeloyl-[acyl-carrier protein] and L-alanine to produce 8-amino-7-oxononanoate (AON), [acyl-carrier protein], and carbon dioxide. This Pseudomonas paraeruginosa (strain DSM 24068 / PA7) (Pseudomonas aeruginosa (strain PA7)) protein is 8-amino-7-oxononanoate synthase.